A 67-amino-acid polypeptide reads, in one-letter code: Large ribosomal subunit protein bL32 (67 aa).

Residues 1–44 form a disordered region; sequence MAVQQNRKSPSKRDMRRSHDALGFSTLSTDSKSGERHRRHHVTK. Residues 11–20 show a composition bias toward basic and acidic residues; sequence SKRDMRRSHD.

Belongs to the bacterial ribosomal protein bL32 family.

In Dichelobacter nodosus (strain VCS1703A), this protein is Large ribosomal subunit protein bL32.